We begin with the raw amino-acid sequence, 116 residues long: Dolichyl-diphosphooligosaccharide--protein glycosyltransferase subunit DAD1 (116 aa).

Residues 1–32 are Cytoplasmic-facing; the sequence is MAKSSATKDAQALFHSLRSAYAATPTNLKIID. A helical transmembrane segment spans residues 33-53; sequence LYVIFAISTALIQVVYMAIVG. Topologically, residues 54-56 are lumenal; the sequence is SFP. Residues 57 to 77 form a helical membrane-spanning segment; it reads FNSFLSGVLSCIGTAVLAVCL. The Cytoplasmic portion of the chain corresponds to 78–95; sequence RIQVNKENKEFKDLPPER. The helical transmembrane segment at 96–116 threads the bilayer; sequence AFADFVLCNLVLHLVIMNFLG.

Belongs to the DAD/OST2 family. In terms of assembly, component of the oligosaccharyltransferase (OST) complex.

Its subcellular location is the endoplasmic reticulum membrane. It functions in the pathway protein modification; protein glycosylation. In terms of biological role, subunit of the oligosaccharyl transferase (OST) complex that catalyzes the initial transfer of a defined glycan (Glc(3)Man(9)GlcNAc(2) in eukaryotes) from the lipid carrier dolichol-pyrophosphate to an asparagine residue within an Asn-X-Ser/Thr consensus motif in nascent polypeptide chains, the first step in protein N-glycosylation. N-glycosylation occurs cotranslationally and the complex associates with the Sec61 complex at the channel-forming translocon complex that mediates protein translocation across the endoplasmic reticulum (ER). All subunits are required for a maximal enzyme activity. The polypeptide is Dolichyl-diphosphooligosaccharide--protein glycosyltransferase subunit DAD1 (DAD1) (Solanum lycopersicum (Tomato)).